The sequence spans 520 residues: F-box/LRR-repeat protein At3g59200 (520 aa).

Residues 6–54 (RDRISSLPNPVVSHILSFLPTKEAASTSVLSKKWRYLFAYVTNLDFDDS) form the F-box domain. LRR repeat units follow at residues 170–197 (CVDVQERGFGFVKLLSGCPVLEELVLMN), 219–244 (FCEETYENPKSVSFDTPNLVYLEYSD), and 340–365 (NSEIRWDSLPGLLKNCPNLETLVLKR).

The sequence is that of F-box/LRR-repeat protein At3g59200 from Arabidopsis thaliana (Mouse-ear cress).